The primary structure comprises 365 residues: Putative carbonic anhydrase-like protein 1 (365 aa).

The signal sequence occupies residues 1–25 (MRFECSHFPLFLIILTCHISPLKSS). One can recognise an Alpha-carbonic anhydrase domain in the interval 28 to 356 (YQWSYDSDVF…TNNRLVRTNI (329 aa)). Tyr-223 is an active-site residue. Residues Thr-295 and 295–296 (TS) contribute to the substrate site.

It belongs to the alpha-carbonic anhydrase family.

The protein resides in the secreted. The chain is Putative carbonic anhydrase-like protein 1 (cah-1) from Caenorhabditis elegans.